Here is a 223-residue protein sequence, read N- to C-terminus: uncharacterized protein (223 aa).

The region spanning 29–220 (KQTYKMFKED…AKEILKNIGD (192 aa)) is the Tyr recombinase domain. Catalysis depends on residues Arg-71, Lys-103, His-170, Arg-173, and His-196. The active-site O-(3'-phospho-DNA)-tyrosine intermediate is the Tyr-205.

It belongs to the 'phage' integrase family.

This is an uncharacterized protein from Methanocaldococcus jannaschii (strain ATCC 43067 / DSM 2661 / JAL-1 / JCM 10045 / NBRC 100440) (Methanococcus jannaschii).